A 175-amino-acid chain; its full sequence is Ribulose bisphosphate carboxylase small subunit, chloroplastic 2 (175 aa).

The N-terminal 46 residues, 1 to 46, are a transit peptide targeting the chloroplast; the sequence is MAPAVMASSATTVAPFQGLKSTAGLPISCRSGSTGLSSVSNGGRIR.

Belongs to the RuBisCO small chain family. As to quaternary structure, heterohexadecamer of 8 large and 8 small subunits.

The protein localises to the plastid. It localises to the chloroplast. In terms of biological role, ruBisCO catalyzes two reactions: the carboxylation of D-ribulose 1,5-bisphosphate, the primary event in carbon dioxide fixation, as well as the oxidative fragmentation of the pentose substrate. Both reactions occur simultaneously and in competition at the same active site. Although the small subunit is not catalytic it is essential for maximal activity. The chain is Ribulose bisphosphate carboxylase small subunit, chloroplastic 2 from Triticum aestivum (Wheat).